A 527-amino-acid chain; its full sequence is 4-alpha-glucanotransferase (527 aa).

The protein belongs to the disproportionating enzyme family.

The protein resides in the cytoplasm. The catalysed reaction is Transfers a segment of a (1-&gt;4)-alpha-D-glucan to a new position in an acceptor, which may be glucose or a (1-&gt;4)-alpha-D-glucan.. In Chlamydia muridarum (strain MoPn / Nigg), this protein is 4-alpha-glucanotransferase (malQ).